The sequence spans 222 residues: MVVLGQKFPEVEVQTTHGRMRLPDHYRGKWFVLFSHPADFTPVCTTEFVEFARNYDKFKAMNTELIGLSIDQVFSHIKWIEWIKEKFNVEIPFPVIADDQGELARMLGMISPYKGTNTVRAVFIVDPEGYIRAMLYYPQETGRNIPEILRLVEALQTADKYGVATPANWHVDRYEFKPSSIVGNDVIIPPASSLEEKKDREERAKKGEIECFDWWFCHKKLE.

Residues 2-157 (VVLGQKFPEV…ILRLVEALQT (156 aa)) enclose the Thioredoxin domain. The Cysteine sulfenic acid (-SOH) intermediate role is filled by cysteine 44. Substrate is bound at residue arginine 120. Cysteine 211 and cysteine 217 are disulfide-bonded.

This sequence belongs to the peroxiredoxin family. Prx6 subfamily. As to quaternary structure, homodecamer. Pentamer of dimers that assemble into a ring structure.

Its subcellular location is the cytoplasm. The enzyme catalyses a hydroperoxide + [thioredoxin]-dithiol = an alcohol + [thioredoxin]-disulfide + H2O. In terms of biological role, thiol-specific peroxidase that catalyzes the reduction of hydrogen peroxide and organic hydroperoxides to water and alcohols, respectively. Plays a role in cell protection against oxidative stress by detoxifying peroxides. In Nanoarchaeum equitans (strain Kin4-M), this protein is Peroxiredoxin.